A 484-amino-acid polypeptide reads, in one-letter code: Probable cytosol aminopeptidase (484 aa).

2 residues coordinate Mn(2+): Lys-256 and Asp-261. The active site involves Lys-268. 3 residues coordinate Mn(2+): Asp-279, Asp-338, and Glu-340. Arg-342 is a catalytic residue.

It belongs to the peptidase M17 family. Mn(2+) serves as cofactor.

Its subcellular location is the cytoplasm. It carries out the reaction Release of an N-terminal amino acid, Xaa-|-Yaa-, in which Xaa is preferably Leu, but may be other amino acids including Pro although not Arg or Lys, and Yaa may be Pro. Amino acid amides and methyl esters are also readily hydrolyzed, but rates on arylamides are exceedingly low.. The enzyme catalyses Release of an N-terminal amino acid, preferentially leucine, but not glutamic or aspartic acids.. Functionally, presumably involved in the processing and regular turnover of intracellular proteins. Catalyzes the removal of unsubstituted N-terminal amino acids from various peptides. This chain is Probable cytosol aminopeptidase, found in Actinobacillus succinogenes (strain ATCC 55618 / DSM 22257 / CCUG 43843 / 130Z).